The primary structure comprises 324 residues: Quinolinate synthase (324 aa).

Residues His-39 and Ser-56 each coordinate iminosuccinate. Cys-101 is a [4Fe-4S] cluster binding site. Iminosuccinate is bound by residues 127-129 (YIN) and Ser-144. Position 187 (Cys-187) interacts with [4Fe-4S] cluster. Iminosuccinate is bound by residues 213–215 (HPE) and Thr-230. Cys-280 lines the [4Fe-4S] cluster pocket.

This sequence belongs to the quinolinate synthase family. Type 2 subfamily. It depends on [4Fe-4S] cluster as a cofactor.

Its subcellular location is the cytoplasm. It carries out the reaction iminosuccinate + dihydroxyacetone phosphate = quinolinate + phosphate + 2 H2O + H(+). It functions in the pathway cofactor biosynthesis; NAD(+) biosynthesis; quinolinate from iminoaspartate: step 1/1. Its function is as follows. Catalyzes the condensation of iminoaspartate with dihydroxyacetone phosphate to form quinolinate. The polypeptide is Quinolinate synthase (Nostoc sp. (strain PCC 7120 / SAG 25.82 / UTEX 2576)).